A 463-amino-acid chain; its full sequence is Asparagine--tRNA ligase (463 aa).

It belongs to the class-II aminoacyl-tRNA synthetase family. As to quaternary structure, homodimer.

Its subcellular location is the cytoplasm. The catalysed reaction is tRNA(Asn) + L-asparagine + ATP = L-asparaginyl-tRNA(Asn) + AMP + diphosphate + H(+). The polypeptide is Asparagine--tRNA ligase (Clostridium acetobutylicum (strain ATCC 824 / DSM 792 / JCM 1419 / IAM 19013 / LMG 5710 / NBRC 13948 / NRRL B-527 / VKM B-1787 / 2291 / W)).